A 487-amino-acid chain; its full sequence is Lysophospholipid acyltransferase 5 (487 aa).

Ala2 carries the post-translational modification N-acetylalanine. 4 consecutive transmembrane segments (helical) span residues 44–64, 84–104, 111–131, and 180–200; these read LIFS…YLFY, FNFG…FLIL, VTAV…GYYY, and GVPS…FLVG. Residue Asn225 is glycosylated (N-linked (GlcNAc...) asparagine). The next 2 membrane-spanning stretches (helical) occupy residues 236–256 and 285–305; these read LGLV…DDYL and VTCW…FNGF. Residues Asn308 and Asn331 are each glycosylated (N-linked (GlcNAc...) asparagine). Residues Asn338 and His374 contribute to the active site. 3 helical membrane passes run 364 to 384, 422 to 442, and 453 to 473; these read GLSL…LICF, LVQQ…FCLF, and SIYF…PYIH. The Di-lysine motif signature appears at 484 to 487; it reads KKRE.

Belongs to the membrane-bound acyltransferase family. As to expression, detected ubiquitously, with high expression levels in small intestine, brown adipose tissue, liver, kidney and testis. Expressed in liver and both proximal and distal small intestine (at protein level). Expressed in peritoneal macrophages.

It is found in the endoplasmic reticulum membrane. The enzyme catalyses a 1-acyl-sn-glycero-3-phosphocholine + an acyl-CoA = a 1,2-diacyl-sn-glycero-3-phosphocholine + CoA. The catalysed reaction is a 1-acyl-sn-glycero-3-phosphoethanolamine + an acyl-CoA = a 1,2-diacyl-sn-glycero-3-phosphoethanolamine + CoA. It carries out the reaction a 1-acyl-sn-glycero-3-phospho-L-serine + an acyl-CoA = a 1,2-diacyl-sn-glycero-3-phospho-L-serine + CoA. It catalyses the reaction (9Z,12Z)-octadecadienoyl-CoA + a 1-acyl-sn-glycero-3-phosphocholine = 1-acyl-2-(9Z,12Z)-octadecadienoyl-sn-glycero-3-phosphocholine + CoA. The enzyme catalyses (5Z,8Z,11Z,14Z)-eicosatetraenoyl-CoA + a 1-acyl-sn-glycero-3-phosphocholine = 1-acyl-2-(5Z,8Z,11Z,14Z-eicosatetraenoyl)-sn-glycero-3-phosphocholine + CoA. The catalysed reaction is dodecanoyl-CoA + 1-hexadecanoyl-sn-glycero-3-phosphocholine = 1-hexadecanoyl-2-dodecanoyl-sn-glycero-3-phosphocholine + CoA. It carries out the reaction octadecanoyl-CoA + 1-hexadecanoyl-sn-glycero-3-phosphocholine = 1-hexadecanoyl-2-octadecanoyl-sn-glycero-3-phosphocholine + CoA. It catalyses the reaction 1-dodecanoyl-sn-glycero-3-phosphocholine + hexadecanoyl-CoA = 1-dodecanoyl-2-hexadecanoyl-sn-glycero-3-phosphocholine + CoA. The enzyme catalyses 1-tetradecanoyl-sn-glycero-3-phosphocholine + hexadecanoyl-CoA = 1-tetradecanoyl-2-hexadecanoyl-sn-glycero-3-phosphocholine + CoA. The catalysed reaction is 1-hexadecanoyl-sn-glycero-3-phosphocholine + hexadecanoyl-CoA = 1,2-dihexadecanoyl-sn-glycero-3-phosphocholine + CoA. It carries out the reaction 1-octadecanoyl-sn-glycero-3-phosphocholine + hexadecanoyl-CoA = 1-octadecanoyl-2-hexadecanoyl-sn-glycero-3-phosphocholine + CoA. It catalyses the reaction 1-(9Z-octadecenoyl)-sn-glycero-3-phosphocholine + hexadecanoyl-CoA = 1-(9Z-octadecenoyl)-2-hexadecanoyl-sn-glycero-3-phosphocholine + CoA. The enzyme catalyses (9Z)-hexadecenoyl-CoA + 1-hexadecanoyl-sn-glycero-3-phosphocholine = 1-hexadecanoyl-2-(9Z-hexadecenoyl)-sn-glycero-3-phosphocholine + CoA. The catalysed reaction is 1-hexadecanoyl-sn-glycero-3-phosphocholine + (9Z)-octadecenoyl-CoA = 1-hexadecanoyl-2-(9Z-octadecenoyl)-sn-glycero-3-phosphocholine + CoA. It carries out the reaction (9Z,12Z)-octadecadienoyl-CoA + 1-hexadecanoyl-sn-glycero-3-phosphocholine = 1-hexadecanoyl-2-(9Z,12Z-octadecadienoyl)-sn-glycero-3-phosphocholine + CoA. It catalyses the reaction 1-dodecanoyl-sn-glycero-3-phosphocholine + (5Z,8Z,11Z,14Z)-eicosatetraenoyl-CoA = 1-dodecanoyl-2-(5Z,8Z,11Z,14Z)-eicosatetraenoyl-sn-glycero-3-phosphocholine + CoA. The enzyme catalyses (5Z,8Z,11Z,14Z)-eicosatetraenoyl-CoA + 1-hexadecanoyl-sn-glycero-3-phosphocholine = 1-hexadecanoyl-2-(5Z,8Z,11Z,14Z-eicosatetraenoyl)-sn-glycero-3-phosphocholine + CoA. The catalysed reaction is 1-octadecanoyl-sn-glycero-3-phosphocholine + (5Z,8Z,11Z,14Z)-eicosatetraenoyl-CoA = 1-octadecanoyl-2-(5Z,8Z,11Z,14Z-eicosatetraenoyl)-sn-glycero-3-phosphocholine + CoA. It carries out the reaction 1-eicosanoyl-sn-glycero-3-phosphocholine + (5Z,8Z,11Z,14Z)-eicosatetraenoyl-CoA = 1-eicosanoyl-2-(5Z,8Z,11Z,14Z)-eicosatetraenoyl-sn-glycero-3-phosphocholine + CoA. It catalyses the reaction 1-(9Z-octadecenoyl)-sn-glycero-3-phosphocholine + (9Z)-octadecenoyl-CoA = 1,2-di-(9Z-octadecenoyl)-sn-glycero-3-phosphocholine + CoA. The enzyme catalyses 1-(9Z-octadecenoyl)-sn-glycero-3-phosphocholine + (9Z,12Z)-octadecadienoyl-CoA = 1-(9Z)-octadecenoyl-2-(9Z,12Z)-octadecadienoyl-sn-glycero-3-phosphocholine + CoA. The catalysed reaction is 1-(9Z-octadecenoyl)-sn-glycero-3-phosphocholine + (5Z,8Z,11Z,14Z)-eicosatetraenoyl-CoA = 1-(9Z)-octadecenoyl-2-(5Z,8Z,11Z,14Z)-icosatetraenoyl-sn-glycero-3-phosphocholine + CoA. It carries out the reaction a 1-acyl-sn-glycero-3-phosphoethanolamine + (9Z,12Z)-octadecadienoyl-CoA = 1-acyl-2-(9Z,12Z)-octadecadienoyl-sn-glycero-3-phosphoethanolamine + CoA. It catalyses the reaction 1-(9Z-octadecenoyl)-sn-glycero-3-phosphoethanolamine + (9Z,12Z)-octadecadienoyl-CoA = 1-(9Z)-octadecenoyl-2-(9Z,12Z)-octadecadienoyl-sn-glycero-3-phosphoethanolamine + CoA. The enzyme catalyses 1-(10Z-heptadecenoyl)-sn-glycero-3-phosphoethanolamine + (9Z,12Z)-octadecadienoyl-CoA = 1-(10Z-heptadecenoyl)-2-(9Z,12Z-octadecadienoyl)-sn-glycero-3-phosphoethanolamine + CoA. The catalysed reaction is a 1-acyl-sn-glycero-3-phosphoethanolamine + (5Z,8Z,11Z,14Z)-eicosatetraenoyl-CoA = 1-acyl-2-(5Z,8Z,11Z,14Z)-eicosatetraenoyl-sn-glycero-3-phosphoethanolamine + CoA. It carries out the reaction 1-hexadecanoyl-sn-glycero-3-phosphoethanolamine + (5Z,8Z,11Z,14Z)-eicosatetraenoyl-CoA = 1-hexadecanoyl-2-(5Z,8Z,11Z,14Z-eicosatetraenoyl)-sn-glycero-3-phosphoethanolamine + CoA. It catalyses the reaction 1-(9Z-octadecenoyl)-sn-glycero-3-phosphoethanolamine + (5Z,8Z,11Z,14Z)-eicosatetraenoyl-CoA = 1-(9Z)-octadecenoyl-2-(5Z,8Z,11Z,14Z)-eicosatetraenoyl-sn-glycero-3-phosphoethanolamine + CoA. The enzyme catalyses 1-(10Z-heptadecenoyl)-sn-glycero-3-phosphoethanolamine + (5Z,8Z,11Z,14Z)-eicosatetraenoyl-CoA = 1-(10Z-heptadecenoyl)-2-(5Z,8Z,11Z,14Z-eicosatetraenoyl)-sn-glycero-3-phosphoethanolamine + CoA. The catalysed reaction is a 1-O-(1Z-alkenyl)-sn-glycero-3-phosphoethanolamine + (5Z,8Z,11Z,14Z)-eicosatetraenoyl-CoA = 1-O-(1Z)-alkenyl-2-(5Z,8Z,11Z,14Z)-eicosatetraenoyl-sn-glycero-3-phosphoethanolamine + CoA. It carries out the reaction a 1-acyl-sn-glycero-3-phospho-L-serine + (9Z,12Z)-octadecadienoyl-CoA = 1-acyl-2-(9Z,12Z-octadecadienoyl)-sn-glycero-3-phospho-L-serine + CoA. It catalyses the reaction a 1-acyl-sn-glycero-3-phospho-L-serine + (5Z,8Z,11Z,14Z)-eicosatetraenoyl-CoA = 1-acyl-2-(5Z,8Z,11Z,14Z-eicosatetraenoyl)-sn-glycero-3-phospho-L-serine + CoA. The enzyme catalyses 1-hexadecanoyl-sn-glycero-3-phospho-L-serine + (9Z)-octadecenoyl-CoA = 1-hexadecanoyl-2-(9Z-octadecenoyl)-sn-glycero-3-phospho-L-serine + CoA. The catalysed reaction is 1-(9Z-octadecenoyl)-sn-glycero-3-phospho-L-serine + (9Z)-octadecenoyl-CoA = 1,2-di-(9Z)-octadecenoyl-sn-glycero-3-phospho-L-serine + CoA. It carries out the reaction 1-hexadecanoyl-sn-glycero-3-phospho-L-serine + (9Z,12Z)-octadecadienoyl-CoA = 1-hexadecanoyl-2-(9Z,12Z-octadecadienoyl)-sn-glycero-3-phospho-L-serine + CoA. It catalyses the reaction 1-(9Z-octadecenoyl)-sn-glycero-3-phospho-L-serine + (9Z,12Z)-octadecadienoyl-CoA = 1-(9Z-octadecenoyl)-2-(9Z,12Z-octadienoyl)-sn-glycero-3-phospho-L-serine + CoA. The enzyme catalyses 1-hexadecanoyl-sn-glycero-3-phospho-L-serine + (5Z,8Z,11Z,14Z)-eicosatetraenoyl-CoA = 1-hexadecanoyl-2-(5Z,8Z,11Z,14Z-eicosatetraenoyl)-sn-glycero-3-phospho-L-serine + CoA. The catalysed reaction is 1-(9Z-octadecenoyl)-sn-glycero-3-phospho-L-serine + (5Z,8Z,11Z,14Z)-eicosatetraenoyl-CoA = 1-(9Z-octadecenoyl)-2-(5Z,8Z,11Z,14Z-eicosatetraenoyl)-sn-glycero-3-phospho-L-serine + CoA. Its pathway is lipid metabolism; phospholipid metabolism. In terms of biological role, lysophospholipid O-acyltransferase (LPLAT) that catalyzes the reacylation step of the phospholipid remodeling process also known as the Lands cycle. Catalyzes transfer of the fatty acyl chain from fatty acyl-CoA to 1-acyl lysophospholipid to form various classes of phospholipids. Converts 1-acyl lysophosphatidylcholine (LPC) into phosphatidylcholine (PC) (LPCAT activity), 1-acyl lysophosphatidylserine (LPS) into phosphatidylserine (PS) (LPSAT activity) and 1-acyl lysophosphatidylethanolamine (LPE) into phosphatidylethanolamine (PE) (LPEAT activity). Favors polyunsaturated fatty acyl-CoAs as acyl donors compared to saturated fatty acyl-CoAs. Has higher activity for LPC acyl acceptors compared to LPEs and LPSs. Can also transfer the fatty acyl chain from fatty acyl-CoA to 1-O-alkyl lysophospholipid or 1-O-alkenyl lysophospholipid with lower efficiency. Acts as a major LPC O-acyltransferase in liver and intestine. As a component of the liver X receptor/NR1H3 or NR1H2 signaling pathway, mainly catalyzes the incorporation of arachidonate into PCs of endoplasmic reticulum (ER) membranes, increasing membrane dynamics and enabling triacylglycerols transfer to nascent very low-density lipoprotein (VLDL) particles. Promotes processing of sterol regulatory protein SREBF1 in hepatocytes, likely by facilitating the translocation of SREBF1-SCAP complex from ER to the Golgi apparatus. Participates in mechanisms by which the liver X receptor/NR1H3 or NR1H2 signaling pathway counteracts lipid-induced ER stress response and inflammation. Down-regulates hepatic inflammation by limiting arachidonic acid availability for synthesis of inflammatory eicosanoids, such as prostaglandins. In enterocytes, acts as a component of a gut-brain feedback loop that coordinates dietary lipid absorption and food intake. Regulates the abundance of PCs containing linoleate and arachidonate in enterocyte membranes, enabling passive diffusion of fatty acids and cholesterol across the membrane for efficient chylomicron assembly. In the intestinal crypt, acts as a component of dietary-responsive phospholipid-cholesterol axis, regulating the biosynthesis of cholesterol and its mitogenic effects on intestinal stem cells. This Mus musculus (Mouse) protein is Lysophospholipid acyltransferase 5 (Lpcat3).